Consider the following 715-residue polypeptide: Eosinophil peroxidase (715 aa).

An N-terminal signal peptide occupies residues 1 to 17 (MHLLPALAGVLATLVLA). A propeptide spanning residues 18–139 (QPCEGTDPAS…SGCALRDQAE (122 aa)) is cleaved from the precursor. N-linked (GlcNAc...) asparagine glycosylation is found at Asn52 and Asn113. Cys141 and Cys152 form a disulfide bridge. Asp232 contacts heme b. The Proton acceptor role is filled by His233. Ca(2+) is bound at residue Asp234. Cystine bridges form between Cys253–Cys263 and Cys257–Cys281. Ca(2+)-binding residues include Thr306, Phe308, Asp310, and Ser312. N-linked (GlcNAc...) asparagine glycosylation is found at Asn327 and Asn363. A disulfide bond links Cys359 and Cys370. Residues Glu380 and His474 each contribute to the heme b site. Tyr488 bears the 3'-nitrotyrosine mark. 2 disulfides stabilise this stretch: Cys578-Cys635 and Cys676-Cys701. N-linked (GlcNAc...) asparagine glycosylation is found at Asn700 and Asn708.

It belongs to the peroxidase family. XPO subfamily. As to quaternary structure, tetramer of two light chains and two heavy chains. Requires Ca(2+) as cofactor. Heme b is required as a cofactor.

The protein localises to the cytoplasmic granule. The enzyme catalyses 2 a phenolic donor + H2O2 = 2 a phenolic radical donor + 2 H2O. In terms of biological role, mediates tyrosine nitration of secondary granule proteins in mature resting eosinophils. Shows significant inhibitory activity towards Mycobacterium tuberculosis H37Rv by inducing bacterial fragmentation and lysis. This Homo sapiens (Human) protein is Eosinophil peroxidase (EPX).